Here is a 430-residue protein sequence, read N- to C-terminus: DNA-binding protein cre-1 (430 aa).

Residues M1–S19 show a composition bias toward polar residues. Disordered stretches follow at residues M1 to P77, I97 to Y187, S265 to S340, and L357 to L430. Residues P30–P46 show a composition bias toward low complexity. 2 consecutive C2H2-type zinc fingers follow at residues Y78 to H100 and H106 to H130. Residues I97–H106 show a composition bias toward basic and acidic residues. Polar residues-rich tracts occupy residues H130–H147 and A175–Y187. The segment covering H268 to Y277 has biased composition (basic and acidic residues). Positions P289–S303 are enriched in low complexity. Residues S412 to S422 show a composition bias toward polar residues.

The protein belongs to the creA/MIG C2H2-type zinc-finger protein family.

The protein resides in the nucleus. Functionally, involved in carbon catabolite repression. Represses the transcription of a number of genes by binding to a GC-rich region in their promoter. The chain is DNA-binding protein cre-1 (cre-1) from Neurospora crassa (strain ATCC 24698 / 74-OR23-1A / CBS 708.71 / DSM 1257 / FGSC 987).